Consider the following 239-residue polypeptide: Ribonuclease 3 (239 aa).

Residues 12-137 form the RNase III domain; sequence RAKLESLIGH…LIAAIYLDGG (126 aa). Residue Glu-50 coordinates Mg(2+). Residue Asp-54 is part of the active site. The Mg(2+) site is built by Asp-123 and Glu-126. Glu-126 is a catalytic residue. The DRBM domain occupies 162–231; that stretch reads DAKTELQEWS…ATKMLEREGI (70 aa).

This sequence belongs to the ribonuclease III family. Homodimer. Requires Mg(2+) as cofactor.

It is found in the cytoplasm. It carries out the reaction Endonucleolytic cleavage to 5'-phosphomonoester.. Functionally, digests double-stranded RNA. Involved in the processing of primary rRNA transcript to yield the immediate precursors to the large and small rRNAs (23S and 16S). Processes some mRNAs, and tRNAs when they are encoded in the rRNA operon. Processes pre-crRNA and tracrRNA of type II CRISPR loci if present in the organism. The sequence is that of Ribonuclease 3 from Rhizobium etli (strain CIAT 652).